Here is an 819-residue protein sequence, read N- to C-terminus: Outer membrane usher protein CssD (819 aa).

This sequence belongs to the fimbrial export usher family.

The protein localises to the cell outer membrane. Involved in the export and assembly of C6 fimbrial subunits across the outer membrane. The chain is Outer membrane usher protein CssD (cssD) from Escherichia coli.